We begin with the raw amino-acid sequence, 363 residues long: MKQLMLYCRQGFEKECAGEIQDKATQLEVYGFPRVFKNAGYVLFECYQDGDADKLARELDFNALIFARQMFAVAAEFTELPSEDRISPILAELGEIDAFPVCGDLRIETPDTNEAKELLKFCRKFTVPMRQALRGKGLLLAKENAKKPVFHLCFVASGHCFAGYSYSHNNSRFFMGIPRLKFPADAPSRSTLKLEEAFHVFIPREEWDTRLSSGMWAVDLGACPGGWTYQLVQRSMFVHCVDNGMMADSLMETGQIKHHMVDGFKFEPDRKNVTWLVCDMVEKPARVAHLMGEWLIKGWAKETIFNLKLPMKGRYDEVLQDIENLKTFLIENKVKFKLQAKHLYHDREEITVHIQVLSNISPH.

Residues S190, 223–226, D242, D262, and D279 each bind S-adenosyl-L-methionine; that span reads CPGG. Catalysis depends on K308, which acts as the Proton acceptor.

This sequence belongs to the class I-like SAM-binding methyltransferase superfamily. RNA methyltransferase RlmE family. RlmM subfamily. Monomer.

It is found in the cytoplasm. It carries out the reaction cytidine(2498) in 23S rRNA + S-adenosyl-L-methionine = 2'-O-methylcytidine(2498) in 23S rRNA + S-adenosyl-L-homocysteine + H(+). Its function is as follows. Catalyzes the 2'-O-methylation at nucleotide C2498 in 23S rRNA. The protein is Ribosomal RNA large subunit methyltransferase M of Vibrio vulnificus (strain CMCP6).